The chain runs to 566 residues: Membrane protein insertase YidC (566 aa).

Transmembrane regions (helical) follow at residues 3–23, 346–366, 369–389, 436–456, and 509–529; these read IKRIILYVIVALLAIALFNAW, GWLWPISMLLFWILSAVHAVV, WGWSIIITTILIKIVFYWFSA, GGCLPMLIQVPVFIAFYYVII, and MWILPVIFTVFFINFPAGLVL.

This sequence belongs to the OXA1/ALB3/YidC family. Type 1 subfamily. As to quaternary structure, interacts with the Sec translocase complex via SecD. Specifically interacts with transmembrane segments of nascent integral membrane proteins during membrane integration.

Its subcellular location is the cell inner membrane. In terms of biological role, required for the insertion and/or proper folding and/or complex formation of integral membrane proteins into the membrane. Involved in integration of membrane proteins that insert both dependently and independently of the Sec translocase complex, as well as at least some lipoproteins. Aids folding of multispanning membrane proteins. The polypeptide is Membrane protein insertase YidC (Coxiella burnetii (strain CbuK_Q154) (Coxiella burnetii (strain Q154))).